We begin with the raw amino-acid sequence, 369 residues long: 2-aminoethylphosphonate--pyruvate transaminase (369 aa).

The residue at position 193 (Lys-193) is an N6-(pyridoxal phosphate)lysine.

It belongs to the class-V pyridoxal-phosphate-dependent aminotransferase family. PhnW subfamily. In terms of assembly, homodimer. Pyridoxal 5'-phosphate is required as a cofactor.

It carries out the reaction (2-aminoethyl)phosphonate + pyruvate = phosphonoacetaldehyde + L-alanine. Involved in phosphonate degradation. This chain is 2-aminoethylphosphonate--pyruvate transaminase, found in Burkholderia pseudomallei (strain 668).